Here is a 344-residue protein sequence, read N- to C-terminus: tRNA(Ile)-lysidine synthase (344 aa).

43-48 (SGGADS) is an ATP binding site.

The protein belongs to the tRNA(Ile)-lysidine synthase family.

Its subcellular location is the cytoplasm. It carries out the reaction cytidine(34) in tRNA(Ile2) + L-lysine + ATP = lysidine(34) in tRNA(Ile2) + AMP + diphosphate + H(+). In terms of biological role, ligates lysine onto the cytidine present at position 34 of the AUA codon-specific tRNA(Ile) that contains the anticodon CAU, in an ATP-dependent manner. Cytidine is converted to lysidine, thus changing the amino acid specificity of the tRNA from methionine to isoleucine. The polypeptide is tRNA(Ile)-lysidine synthase (Bordetella parapertussis (strain 12822 / ATCC BAA-587 / NCTC 13253)).